We begin with the raw amino-acid sequence, 175 residues long: Ribosome-binding factor A (175 aa).

Residues 129–175 form a disordered region; sequence GAKPAGEADPYRDRGSADEPSDAGGLVIRTSDGLEAENTGDDYQAED. Positions 162 to 175 are enriched in acidic residues; that stretch reads LEAENTGDDYQAED.

The protein belongs to the RbfA family. As to quaternary structure, monomer. Binds 30S ribosomal subunits, but not 50S ribosomal subunits or 70S ribosomes.

It localises to the cytoplasm. One of several proteins that assist in the late maturation steps of the functional core of the 30S ribosomal subunit. Associates with free 30S ribosomal subunits (but not with 30S subunits that are part of 70S ribosomes or polysomes). Required for efficient processing of 16S rRNA. May interact with the 5'-terminal helix region of 16S rRNA. This Mycobacterium marinum (strain ATCC BAA-535 / M) protein is Ribosome-binding factor A.